Consider the following 250-residue polypeptide: Octanoyltransferase (250 aa).

The region spanning 49–230 (DEINDVILVL…ALDDAFAGRL (182 aa)) is the BPL/LPL catalytic domain. Substrate is bound by residues 87–94 (RGGRITWH), 160–162 (ALG), and 173–175 (GLA). The Acyl-thioester intermediate role is filled by cysteine 191.

Belongs to the LipB family.

Its subcellular location is the cytoplasm. It carries out the reaction octanoyl-[ACP] + L-lysyl-[protein] = N(6)-octanoyl-L-lysyl-[protein] + holo-[ACP] + H(+). It participates in protein modification; protein lipoylation via endogenous pathway; protein N(6)-(lipoyl)lysine from octanoyl-[acyl-carrier-protein]: step 1/2. Functionally, catalyzes the transfer of endogenously produced octanoic acid from octanoyl-acyl-carrier-protein onto the lipoyl domains of lipoate-dependent enzymes. Lipoyl-ACP can also act as a substrate although octanoyl-ACP is likely to be the physiological substrate. The protein is Octanoyltransferase of Corynebacterium diphtheriae (strain ATCC 700971 / NCTC 13129 / Biotype gravis).